The chain runs to 640 residues: Isoniazid-induced protein IniA (640 aa).

Residues 497 to 519 traverse the membrane as a helical segment; it reads IGMLSSVVGLGLFNPLSVGAGLI. Positions 560 to 628 form a coiled coil; sequence RDRLKMIQRL…QVNDNLAGLE (69 aa).

In terms of assembly, forms multimeric structures containing a central pore.

The protein localises to the cell membrane. Its function is as follows. Participates in the development of tolerance to both isoniazid and ethambutol. May function through a MDR-pump like mechanism, although it does not appear to directly transport isoniazid from the cell. The sequence is that of Isoniazid-induced protein IniA (iniA) from Mycobacterium tuberculosis (strain CDC 1551 / Oshkosh).